The chain runs to 162 residues: Protein NrdI (162 aa).

It belongs to the NrdI family.

Its function is as follows. Probably involved in ribonucleotide reductase function. In Streptococcus pyogenes serotype M1, this protein is Protein NrdI.